We begin with the raw amino-acid sequence, 181 residues long: c-Myc-binding protein homolog (181 aa).

Residues 111–127 show a composition bias toward low complexity; that stretch reads ESTEAAEQQQQQQQQEN. 2 disordered regions span residues 111-145 and 159-181; these read ESTEAAEQQQQQQQQENGETELEKPNESSADVAEI and VVTTDEAAQPSPTVQAEASGSSE. Residues 168 to 181 are compositionally biased toward polar residues; it reads PSPTVQAEASGSSE.

The protein belongs to the AMY1 family.

The protein resides in the nucleus. This Drosophila melanogaster (Fruit fly) protein is c-Myc-binding protein homolog.